Reading from the N-terminus, the 351-residue chain is Calcium uniporter protein, mitochondrial (351 aa).

The N-terminal 50 residues, 1–50 (MAAAAGRSLLLLLSSRGGGGGGAGGCGALTAGCFPGLGVSRHRQQQHHRT), are a transit peptide targeting the mitochondrion. Residues 51–233 (VHQRIASWQN…ISRKAEKRTT (183 aa)) lie on the Mitochondrial matrix side of the membrane. Ser57 and Ser92 each carry phosphoserine; by CaMK2. The tract at residues 75–165 (VTVVYQNGLP…LTYHVRPPKR (91 aa)) is N-terminal MCU domain. The residue at position 97 (Cys97) is an S-glutathionyl cysteine. Residues 192–223 (IEQHQLNKERELIERLEDLKEQLAPLEKVRIE) adopt a coiled-coil conformation. The chain crosses the membrane as a helical span at residues 234–255 (LVLWGGLAYMATQFGILARLTW). Residues 256 to 262 (WEYSWDI) lie on the Mitochondrial intermembrane side of the membrane. Positions 260–268 (WDIMEPVTY) match the Selectivity filter motif. The chain crosses the membrane as a helical span at residues 263–284 (MEPVTYFITYGSAMAMYAYFVM). Glu264 is a Ca(2+) binding site. Positions 285 to 290 (TRQEYV) are juxtamembrane helix. Residues 285–351 (TRQEYVYPEA…LPLRQIGEKD (67 aa)) are Mitochondrial matrix-facing. The stretch at 311–339 (RFDLEKYNQLKDAIAQAEMDLKRLRDPLQ) forms a coiled coil. Lys332 carries the N6-acetyllysine modification.

This sequence belongs to the MCU (TC 1.A.77) family. As to quaternary structure, homotetramer. Component of the uniplex complex, composed of MCU, EMRE/SMDT1, MICU1 and MICU2 (or MICU3) in a 4:4:1:1 stoichiometry. Interacts with CCDC109B/MCUB; this inhibits channel activity. Interacts with MCUR1. Interactions with MICU1 and MCUR1 are mutually exclusive. Interacts with SLC25A23. Phosphorylation by CaMK2 in heart leads to increased MCU current. The regulation of MCU by CaMK2 is however subject to discussion: another group was unable to reproduce these results. Phosphorylated on tyrosines by PTK2B/PYK2, promoting oligomerization. Post-translationally, glutathionylation at Cys-97 in response to reactive oxygen species (ROS) promotes MCU higher-order assembly, leading to constitutive activation of the MCU channel and mitochondrial calcium overload. In terms of processing, undergoes proteolytic degradation by SPG7.

The protein resides in the mitochondrion inner membrane. It catalyses the reaction Ca(2+)(in) = Ca(2+)(out). With respect to regulation, MCU channel activity is regulated by the heterodimer composed of MICU1 and either MICU2 or MICU3, which act as calcium-sensors. At low calcium levels, MICU1 occludes the pore of the MCU channel, preventing mitochondrial calcium uptake. At higher calcium levels, calcium-binding to MICU1 and MICU2 (or MICU3) induces a conformational change that weakens MCU-MICU1 interactions and moves the MICU1-MICU2 heterodimer away from the pore, allowing calcium permeation through the channel. MCU channel activity is gated by EMRE/SMDT1 via the juxtamembrane helix loop. Inhibited by ruthenium red or its derivative Ru360. In terms of biological role, channel-forming and calcium-conducting subunit of the mitochondrial inner membrane calcium uniporter complex (uniplex), which mediates calcium uptake into the mitochondrial matrix. MCU channel activity is regulated by the calcium-sensor subunits of the uniplex MICU1 and MICU2 (or MICU3). Mitochondrial calcium homeostasis plays key roles in cellular physiology and regulates ATP production, cytoplasmic calcium signals and activation of cell death pathways. Involved in buffering the amplitude of systolic calcium rises in cardiomyocytes. While dispensable for baseline homeostatic cardiac function, acts as a key regulator of short-term mitochondrial calcium loading underlying a 'fight-or-flight' response during acute stress: acts by mediating a rapid increase of mitochondrial calcium in pacemaker cells. Participates in mitochondrial permeability transition during ischemia-reperfusion injury. Mitochondrial calcium uptake in skeletal muscle cells is involved in muscle size in adults. Regulates synaptic vesicle endocytosis kinetics in central nerve terminal. Regulates glucose-dependent insulin secretion in pancreatic beta-cells by regulating mitochondrial calcium uptake. Involved in antigen processing and presentation. The chain is Calcium uniporter protein, mitochondrial from Homo sapiens (Human).